The chain runs to 426 residues: UDP-N-acetylglucosamine 1-carboxyvinyltransferase (426 aa).

22 to 23 (KN) is a binding site for phosphoenolpyruvate. Arginine 93 lines the UDP-N-acetyl-alpha-D-glucosamine pocket. Cysteine 117 (proton donor) is an active-site residue. Cysteine 117 bears the 2-(S-cysteinyl)pyruvic acid O-phosphothioketal mark. Residues 162 to 165 (KVSV), aspartate 307, and isoleucine 329 each bind UDP-N-acetyl-alpha-D-glucosamine.

It belongs to the EPSP synthase family. MurA subfamily.

The protein resides in the cytoplasm. It carries out the reaction phosphoenolpyruvate + UDP-N-acetyl-alpha-D-glucosamine = UDP-N-acetyl-3-O-(1-carboxyvinyl)-alpha-D-glucosamine + phosphate. Its pathway is cell wall biogenesis; peptidoglycan biosynthesis. Its function is as follows. Cell wall formation. Adds enolpyruvyl to UDP-N-acetylglucosamine. The protein is UDP-N-acetylglucosamine 1-carboxyvinyltransferase of Haemophilus ducreyi (strain 35000HP / ATCC 700724).